We begin with the raw amino-acid sequence, 437 residues long: Argininosuccinate lyase (437 aa).

The protein belongs to the lyase 1 family. Argininosuccinate lyase subfamily.

It localises to the cytoplasm. It carries out the reaction 2-(N(omega)-L-arginino)succinate = fumarate + L-arginine. It participates in amino-acid biosynthesis; L-arginine biosynthesis; L-arginine from L-ornithine and carbamoyl phosphate: step 3/3. The chain is Argininosuccinate lyase from Clostridium acetobutylicum (strain ATCC 824 / DSM 792 / JCM 1419 / IAM 19013 / LMG 5710 / NBRC 13948 / NRRL B-527 / VKM B-1787 / 2291 / W).